The chain runs to 456 residues: Amino acid transporter AVT6B (456 aa).

Helical transmembrane passes span Phe37–Pro57, Ala58–Leu78, Ile118–Ala138, Thr164–Ile184, Ser191–Ile211, Leu236–Ile256, Ala273–Gly293, Leu328–Phe348, Ser365–Trp385, Phe388–Ile408, and Ile423–Ala443.

The protein belongs to the amino acid/polyamine transporter 2 family. Amino acid/auxin permease (AAAP) (TC 2.A.18.6) subfamily.

It is found in the membrane. The protein is Amino acid transporter AVT6B of Arabidopsis thaliana (Mouse-ear cress).